The sequence spans 299 residues: MLDKARLRIAMQKSGRLSDDSRALLARCGIKINLNQQRLIAYAENMPIDILRVRDDDIPGLVMDGVVDLGIIGENVLEEELLKRRAQGENPSYITLRRLDFGACRLSLAAPVDFDYQGVECLNNTRIATSYPNLLKRYLDQKGITFKSCLLNGSVEVAPRAGLADSICDLVSTGATLEANGLKEVEVIYRSKACLIQRDGEMDATKQALIDRLMTRIQGVIQARESKYIMLHAPSDCLEDVIALLPGAERPTILPLAGDQNRVAMHMVSSETLFWETMEKLKALGASSILVLPIEKMME.

The protein belongs to the ATP phosphoribosyltransferase family. Long subfamily. In terms of assembly, equilibrium between an active dimeric form, an inactive hexameric form and higher aggregates. Interconversion between the various forms is largely reversible and is influenced by the natural substrates and inhibitors of the enzyme. It depends on Mg(2+) as a cofactor.

Its subcellular location is the cytoplasm. The enzyme catalyses 1-(5-phospho-beta-D-ribosyl)-ATP + diphosphate = 5-phospho-alpha-D-ribose 1-diphosphate + ATP. Its pathway is amino-acid biosynthesis; L-histidine biosynthesis; L-histidine from 5-phospho-alpha-D-ribose 1-diphosphate: step 1/9. Its activity is regulated as follows. Feedback inhibited by histidine. Catalyzes the condensation of ATP and 5-phosphoribose 1-diphosphate to form N'-(5'-phosphoribosyl)-ATP (PR-ATP). Has a crucial role in the pathway because the rate of histidine biosynthesis seems to be controlled primarily by regulation of HisG enzymatic activity. The chain is ATP phosphoribosyltransferase from Proteus mirabilis (strain HI4320).